Here is a 20-residue protein sequence, read N- to C-terminus: Protein PR-L3 (20 aa).

Belongs to the BetVI family.

The sequence is that of Protein PR-L3 from Lupinus luteus (European yellow lupine).